The chain runs to 90 residues: Small ribosomal subunit protein bS20 (90 aa).

A disordered region spans residues 1 to 25 (MANSAQARKRARQAAKANSHNSALR).

This sequence belongs to the bacterial ribosomal protein bS20 family.

Functionally, binds directly to 16S ribosomal RNA. The sequence is that of Small ribosomal subunit protein bS20 from Burkholderia orbicola (strain MC0-3).